The following is a 166-amino-acid chain: Urease accessory protein UreE (166 aa).

The disordered stretch occupies residues 133-154; it reads QPEHGAYGGGHHHSRHGDEDFN.

It belongs to the UreE family.

It is found in the cytoplasm. Its function is as follows. Involved in urease metallocenter assembly. Binds nickel. Probably functions as a nickel donor during metallocenter assembly. This Pseudomonas fluorescens (strain SBW25) protein is Urease accessory protein UreE.